The following is a 464-amino-acid chain: Arginine biosynthesis bifunctional protein ArgJ, mitochondrial (464 aa).

The N-terminal 22 residues, 1 to 22, are a transit peptide targeting the mitochondrion; it reads MAASFKALPQQLTLTRSFARCY. Residues Thr193, Lys222, Thr233, Glu320, Asn459, and Thr464 each coordinate substrate. Residue Thr233 is the Nucleophile of the active site.

The protein belongs to the ArgJ family. In terms of assembly, heterodimer of an alpha and a beta chain. In terms of processing, the alpha and beta chains are autoproteolytically processed from a single precursor protein within the mitochondrion.

Its subcellular location is the mitochondrion matrix. It carries out the reaction N(2)-acetyl-L-ornithine + L-glutamate = N-acetyl-L-glutamate + L-ornithine. The enzyme catalyses L-glutamate + acetyl-CoA = N-acetyl-L-glutamate + CoA + H(+). Its pathway is amino-acid biosynthesis; L-arginine biosynthesis; L-ornithine and N-acetyl-L-glutamate from L-glutamate and N(2)-acetyl-L-ornithine (cyclic): step 1/1. It functions in the pathway amino-acid biosynthesis; L-arginine biosynthesis; N(2)-acetyl-L-ornithine from L-glutamate: step 1/4. Its function is as follows. Catalyzes two activities which are involved in the cyclic version of arginine biosynthesis: the synthesis of acetylglutamate from glutamate and acetyl-CoA, and of ornithine by transacetylation between acetylornithine and glutamate. The chain is Arginine biosynthesis bifunctional protein ArgJ, mitochondrial from Verticillium alfalfae (strain VaMs.102 / ATCC MYA-4576 / FGSC 10136) (Verticillium wilt of alfalfa).